The primary structure comprises 189 residues: GMP synthase [glutamine-hydrolyzing] subunit A (189 aa).

The Glutamine amidotransferase type-1 domain occupies 1 to 189 (MIVILNNGGQ…CKKCGFGFEE (189 aa)). The active-site Nucleophile is the Cys-76. Catalysis depends on residues His-163 and Glu-165.

As to quaternary structure, heterodimer composed of a glutamine amidotransferase subunit (A) and a GMP-binding subunit (B).

It carries out the reaction XMP + L-glutamine + ATP + H2O = GMP + L-glutamate + AMP + diphosphate + 2 H(+). The protein operates within purine metabolism; GMP biosynthesis; GMP from XMP (L-Gln route): step 1/1. Functionally, catalyzes the synthesis of GMP from XMP. This chain is GMP synthase [glutamine-hydrolyzing] subunit A, found in Methanococcus maripaludis (strain DSM 14266 / JCM 13030 / NBRC 101832 / S2 / LL).